Consider the following 317-residue polypeptide: Transaldolase (317 aa).

Catalysis depends on lysine 126, which acts as the Schiff-base intermediate with substrate.

The protein belongs to the transaldolase family. Type 1 subfamily. As to quaternary structure, homodimer.

Its subcellular location is the cytoplasm. It catalyses the reaction D-sedoheptulose 7-phosphate + D-glyceraldehyde 3-phosphate = D-erythrose 4-phosphate + beta-D-fructose 6-phosphate. It participates in carbohydrate degradation; pentose phosphate pathway; D-glyceraldehyde 3-phosphate and beta-D-fructose 6-phosphate from D-ribose 5-phosphate and D-xylulose 5-phosphate (non-oxidative stage): step 2/3. Its function is as follows. Transaldolase is important for the balance of metabolites in the pentose-phosphate pathway. The chain is Transaldolase from Burkholderia pseudomallei (strain 1710b).